The following is a 249-amino-acid chain: NADH dehydrogenase [ubiquinone] flavoprotein 2, mitochondrial (249 aa).

The N-terminal 32 residues, 1-32 (MFFSAALRARAAGLTAHWGRHVRNLHKTAKQN), are a transit peptide targeting the mitochondrion. An N6-acetyllysine modification is found at Lys61. Residues Cys135, Cys140, Cys176, and Cys180 each contribute to the [2Fe-2S] cluster site. Tyr193 carries the phosphotyrosine; by SRC modification. Residues 213-249 (IPKPGPRSGRFSCEPAGGLTSLTEPPKGPGFGVQAGL) form a disordered region.

This sequence belongs to the complex I 24 kDa subunit family. In terms of assembly, core subunit of respiratory chain NADH dehydrogenase (Complex I) which is composed of 45 different subunits. This is a component of the flavoprotein-sulfur (FP) fragment of the enzyme. [2Fe-2S] cluster is required as a cofactor.

The protein resides in the mitochondrion inner membrane. The catalysed reaction is a ubiquinone + NADH + 5 H(+)(in) = a ubiquinol + NAD(+) + 4 H(+)(out). Functionally, core subunit of the mitochondrial membrane respiratory chain NADH dehydrogenase (Complex I) which catalyzes electron transfer from NADH through the respiratory chain, using ubiquinone as an electron acceptor. Parts of the peripheral arm of the enzyme, where the electrons from NADH are accepted by flavin mononucleotide (FMN) and then passed along a chain of iron-sulfur clusters by electron tunnelling to the final acceptor ubiquinone. Contains one iron-sulfur cluster. In Pan troglodytes (Chimpanzee), this protein is NADH dehydrogenase [ubiquinone] flavoprotein 2, mitochondrial.